A 452-amino-acid polypeptide reads, in one-letter code: MGRLFGTDGVRGVANADLTAELALGLSVAAAHVLAEAGTFAGHRPTAVVGRDPRASGEFLEAAVVAGLASAGVDVLRVGVLPTPAVAYLTGSLGADIGVMLSASHNAMPDNGVKFFARGGHKLADELEDRIETVYEQHRTGEPWSRPTGAGVGRVTDYTEGFDRYVAHLIGVLPNRLDGLKVVLDEAHGAAARVSPEAFARAGAEVVTIGADPDGLNINDGCGSTHLELLRAAVVEHGADLGIAHDGDADRCLAVDAAGEEVDGDQILAVLALAMRDAGQLRKDTVVGTVMSNLGFKLAMEREGIRLVQTAVGDRYVLESMKAEGFALGGEQSGHVIVLDHATTGDGTLTGLMLAARVAATGRSLAELAGVMQRLPQVLINVPDVDKTRVNTSSELATAVVEAERELGENGRVLLRQSGTEPLVRVMVEAADIEQARAVAGRLADVVKSALG.

S104 serves as the catalytic Phosphoserine intermediate. Residues S104, D246, D248, and D250 each contribute to the Mg(2+) site. A Phosphoserine modification is found at S104.

This sequence belongs to the phosphohexose mutase family. It depends on Mg(2+) as a cofactor. Post-translationally, activated by phosphorylation.

It carries out the reaction alpha-D-glucosamine 1-phosphate = D-glucosamine 6-phosphate. Functionally, catalyzes the conversion of glucosamine-6-phosphate to glucosamine-1-phosphate. The sequence is that of Phosphoglucosamine mutase from Streptomyces griseus subsp. griseus (strain JCM 4626 / CBS 651.72 / NBRC 13350 / KCC S-0626 / ISP 5235).